Reading from the N-terminus, the 144-residue chain is Large ribosomal subunit protein uL13 (144 aa).

Belongs to the universal ribosomal protein uL13 family. Part of the 50S ribosomal subunit.

Functionally, this protein is one of the early assembly proteins of the 50S ribosomal subunit, although it is not seen to bind rRNA by itself. It is important during the early stages of 50S assembly. The protein is Large ribosomal subunit protein uL13 of Ruminiclostridium cellulolyticum (strain ATCC 35319 / DSM 5812 / JCM 6584 / H10) (Clostridium cellulolyticum).